The sequence spans 255 residues: Aliphatic sulfonates import ATP-binding protein SsuB (255 aa).

The 222-residue stretch at Leu-12–Leu-233 folds into the ABC transporter domain. Gly-44 to Ser-51 is a binding site for ATP.

The protein belongs to the ABC transporter superfamily. Aliphatic sulfonates importer (TC 3.A.1.17.2) family. The complex is composed of two ATP-binding proteins (SsuB), two transmembrane proteins (SsuC) and a solute-binding protein (SsuA).

It localises to the cell inner membrane. It catalyses the reaction ATP + H2O + aliphatic sulfonate-[sulfonate-binding protein]Side 1 = ADP + phosphate + aliphatic sulfonateSide 2 + [sulfonate-binding protein]Side 1.. Part of the ABC transporter complex SsuABC involved in aliphatic sulfonates import. Responsible for energy coupling to the transport system. This is Aliphatic sulfonates import ATP-binding protein SsuB from Escherichia coli O6:H1 (strain CFT073 / ATCC 700928 / UPEC).